The chain runs to 284 residues: RNase adapter protein RapZ (284 aa).

Gly-8–Ser-15 contacts ATP. Asp-56–Asn-59 contacts GTP. The tract at residues Arg-266–Thr-284 is RNA-binding.

This sequence belongs to the RapZ-like family. RapZ subfamily. Homotrimer.

Functionally, modulates the synthesis of GlmS, by affecting the processing and stability of the regulatory small RNA GlmZ. When glucosamine-6-phosphate (GlcN6P) concentrations are high in the cell, RapZ binds GlmZ and targets it to cleavage by RNase E. Consequently, GlmZ is inactivated and unable to activate GlmS synthesis. Under low GlcN6P concentrations, RapZ is sequestered and inactivated by an other regulatory small RNA, GlmY, preventing GlmZ degradation and leading to synthesis of GlmS. In Salmonella typhi, this protein is RNase adapter protein RapZ.